The chain runs to 289 residues: MAKQDIEASGPEAGEFSAKDYTDPPPAPLIDADELTKWSLYRAVIAEFIATLLFLYITVATVIGYKHQTDAAASGPDAACGGVGILGIAWAFGGMIFILVYCTAGISGGHINPAVTFGLFLARKVSLVRALLYIIAQCLGAICGVGLVKGFQSAYYVRYGGGANELSDGYSKGTGLAAEIIGTFVLVYTVFSATDPKRSARDSHVPVLAPLPIGFAVFMVHLATIPITGTGINPARSLGAAVIYNKDKAWDDQWIFWVGPLIGAAIAAAYHQYVLRASATKLGSYRSNA.

The interval 1–25 (MAKQDIEASGPEAGEFSAKDYTDPP) is disordered. Helical transmembrane passes span 43 to 63 (AVIAEFIATLLFLYITVATVI) and 80 to 100 (CGGVGILGIAWAFGGMIFILV). Residues 112–114 (NPA) carry the NPA 1 motif. 3 helical membrane-spanning segments follow: residues 131-151 (LLYIIAQCLGAICGVGLVKGF), 173-193 (GTGLAAEIIGTFVLVYTVFSA), and 207-227 (VLAPLPIGFAVFMVHLATIPI). Residues 233–235 (NPA) carry the NPA 2 motif. A helical transmembrane segment spans residues 255–275 (IFWVGPLIGAAIAAAYHQYVL).

This sequence belongs to the MIP/aquaporin (TC 1.A.8) family. PIP (TC 1.A.8.11) subfamily.

It localises to the cell membrane. Functionally, aquaporins facilitate the transport of water and small neutral solutes across cell membranes. This Zea mays (Maize) protein is Aquaporin PIP2-3 (PIP2-3).